Here is a 148-residue protein sequence, read N- to C-terminus: Prefoldin subunit 2 (148 aa).

Residues 87–114 (KDGLEEVVRKLYETLEKKKKDLTEFEAK) adopt a coiled-coil conformation. The segment covering 122 to 134 (QEDNKEGGNKKEG) has biased composition (basic and acidic residues). Residues 122 to 148 (QEDNKEGGNKKEGNAQGVLVGAASSSQ) are disordered.

Belongs to the prefoldin subunit beta family. Heterohexamer of two PFD-alpha type and four PFD-beta type subunits forming prefoldin co-chaperone complex. Interacts with LSM8, a specific subunit of the LSM2-8 complex, which is a core component of the spliceosome.

It localises to the cytoplasm. The protein localises to the nucleus. Its function is as follows. Binds specifically to cytosolic chaperonin (c-CPN) and transfers target proteins to it. Binds to nascent polypeptide chain and promotes folding in an environment in which there are many competing pathways for nonnative proteins. Together with other chaperonins, contribute to the regulation of gene expression by modulating the spliceosome function on pre-mRNA splicing post-transcriptionally by acting as a co-chaperone of Hsp90 to control levels of LSM8. Required for microtubules (MTs) organization and dynamicity. Involved in the process leading to microtubules dissociation in response to gibberellic acid (GA) probably due to the DELLA proteins-mediated translocation of the prefoldin co-chaperone complex from the cytoplasm to the nucleus. This is Prefoldin subunit 2 from Arabidopsis thaliana (Mouse-ear cress).